The sequence spans 117 residues: MNNIIKMLNEEQMKTDVPEFGAGDTVVVKVRVVEGGKERLQAFEGVVIAKRNRGVHSAFTVRKISNGEGVERAFQTHSPIISSIEVKRRGRVRRAKLYYLRERSGKSARIREKLSTK.

The protein belongs to the bacterial ribosomal protein bL19 family.

Its function is as follows. This protein is located at the 30S-50S ribosomal subunit interface and may play a role in the structure and function of the aminoacyl-tRNA binding site. This is Large ribosomal subunit protein bL19 from Shewanella piezotolerans (strain WP3 / JCM 13877).